The chain runs to 614 residues: Probable indole-3-acetic acid-amido synthetase GH3.2 (614 aa).

The protein belongs to the IAA-amido conjugating enzyme family. As to expression, expressed in roots, flowers and callus.

Its function is as follows. May catalyze the synthesis of indole-3-acetic acid (IAA)-amino acid conjugates, providing a mechanism for the plant to cope with the presence of excess auxin. The protein is Probable indole-3-acetic acid-amido synthetase GH3.2 (GH3.2) of Oryza sativa subsp. japonica (Rice).